We begin with the raw amino-acid sequence, 106 residues long: MNKEKLSDHLKSEWKKIDQTANPSIPNQKELLHQLSQMKAEYRKKLLQEIILFVFCALMVVSAAILAFTQAPAVFIVLQVCVLAVLPILIAAEKKRHLGECEVKRG.

Helical transmembrane passes span 46 to 68 (LLQE…ILAF) and 73 to 92 (AVFI…LIAA).

Its subcellular location is the cell membrane. This is an uncharacterized protein from Bacillus subtilis (strain 168).